An 80-amino-acid polypeptide reads, in one-letter code: Venom protein HGE029 (80 aa).

Residues 1 to 22 (MNAKAFLAIFMIALLITDRAEA) form the signal peptide.

Belongs to the non-disulfide-bridged peptide (NDBP) superfamily. Long chain multifunctional peptide (group 2) family. In terms of tissue distribution, expressed by the venom gland.

It is found in the secreted. The protein is Venom protein HGE029 of Hoffmannihadrurus gertschi (Scorpion).